A 278-amino-acid chain; its full sequence is Translation initiation factor IF-3, mitochondrial (278 aa).

The transit peptide at 1 to 31 (MAALFLKRLTLQTVKSENSCIRCFGKHILQK) directs the protein to the mitochondrion. A disordered region spans residues 249–278 (KAYKETQETQERDTLNKDHGNDKESNVLHQ).

Belongs to the IF-3 family.

It localises to the mitochondrion. In terms of biological role, IF-3 binds to the 28S ribosomal subunit and shifts the equilibrium between 55S ribosomes and their 39S and 28S subunits in favor of the free subunits, thus enhancing the availability of 28S subunits on which protein synthesis initiation begins. This chain is Translation initiation factor IF-3, mitochondrial (MTIF3), found in Homo sapiens (Human).